The sequence spans 387 residues: MGILGLSKLIADLAPQAIRESEMKHFFGRKVAIDASMCLYQFLIAVRSEGAQLATVNGDPTSHLMGMFYRTIRLLDNGIKPVYVFDGKPPDLKSGELAKRAERREEAEKALKAATDAGDDAGIEKFNRRLVRVTKEHAKEAKELLTLMGVPYVDAPCEAEAQCAALVKAGKVYATATEDMDALTFGSTKLLRYLTYSEARKMPVKEFSYDKLLEGLSINSREFIDLCILLGCDYCESIKGIGPKRAIELINNYRDIETILDNLDSSKYTVPENWNYKVARELFIEPEVANAESIDLKWVEPDEEGLVKFLCGDRQFSEERVRNGAKKLMKSKQAQTQVRLDSFFKTLPSTPNATNAAKRKAEEAKKSANNKKAKTSGGVGGRGRRPK.

The N-domain stretch occupies residues 1-104; sequence MGILGLSKLI…GELAKRAERR (104 aa). Asp34 provides a ligand contact to Mg(2+). Arg47 and Arg70 together coordinate DNA. 5 residues coordinate Mg(2+): Asp86, Glu158, Glu160, Asp179, and Asp181. The segment at 122–253 is I-domain; the sequence is GIEKFNRRLV…KRAIELINNY (132 aa). Position 158 (Glu158) interacts with DNA. DNA-binding residues include Gly231 and Asp233. A Mg(2+)-binding site is contributed by Asp233. The segment at 336 to 344 is interaction with PCNA; sequence TQVRLDSFF. The tract at residues 346-387 is disordered; sequence TLPSTPNATNAAKRKAEEAKKSANNKKAKTSGGVGGRGRRPK.

This sequence belongs to the XPG/RAD2 endonuclease family. FEN1 subfamily. In terms of assembly, interacts with PCNA. Three molecules of FEN1 bind to one PCNA trimer with each molecule binding to one PCNA monomer. PCNA stimulates the nuclease activity without altering cleavage specificity. The cofactor is Mg(2+). In terms of processing, phosphorylated. Phosphorylation upon DNA damage induces relocalization to the nuclear plasma.

It is found in the nucleus. The protein resides in the nucleolus. Its subcellular location is the nucleoplasm. It localises to the mitochondrion. Its function is as follows. Structure-specific nuclease with 5'-flap endonuclease and 5'-3' exonuclease activities involved in DNA replication and repair. During DNA replication, cleaves the 5'-overhanging flap structure that is generated by displacement synthesis when DNA polymerase encounters the 5'-end of a downstream Okazaki fragment. It enters the flap from the 5'-end and then tracks to cleave the flap base, leaving a nick for ligation. Also involved in the long patch base excision repair (LP-BER) pathway, by cleaving within the apurinic/apyrimidinic (AP) site-terminated flap. Acts as a genome stabilization factor that prevents flaps from equilibrating into structures that lead to duplications and deletions. Also possesses 5'-3' exonuclease activity on nicked or gapped double-stranded DNA, and exhibits RNase H activity. Also involved in replication and repair of rDNA and in repairing mitochondrial DNA. The sequence is that of Flap endonuclease 1 from Drosophila erecta (Fruit fly).